An 86-amino-acid polypeptide reads, in one-letter code: MKLTCVLIIAVLFLTACQLATAKTYSKGRQKHRALRSTDKNIKLTRRCTPDDGACAEPVQCCSTFCNPVTNMCIDWLGIGLSRSVL.

An N-terminal signal peptide occupies residues 1–22; the sequence is MKLTCVLIIAVLFLTACQLATA. The propeptide occupies 23–45; that stretch reads KTYSKGRQKHRALRSTDKNIKLT. Cystine bridges form between cysteine 48/cysteine 62, cysteine 55/cysteine 66, and cysteine 61/cysteine 73.

This sequence belongs to the conotoxin O1 superfamily. Expressed by the venom duct.

The protein resides in the secreted. The polypeptide is Conotoxin S6.10 (Conus striatus (Striated cone)).